Consider the following 565-residue polypeptide: Adenine deaminase (565 aa).

Belongs to the metallo-dependent hydrolases superfamily. Adenine deaminase family. Requires Mn(2+) as cofactor.

It carries out the reaction adenine + H2O + H(+) = hypoxanthine + NH4(+). In Methylobacterium nodulans (strain LMG 21967 / CNCM I-2342 / ORS 2060), this protein is Adenine deaminase.